The sequence spans 870 residues: MMPPPFMPPPGLPPPFPPMGLPPMSQRPPAIPPMPPGILPPMLPPMGAPPPLTQIPGMVPPMMPGMLMPAVPVTAATAPGADTASSAVAGTGPPRALWSEHVAPDGRIYYYNADDKQSVWEKPSVLKSKAELLLSQCPWKEYKSDTGKPYYYNNQSQESRWTRPKDLDDLEALVKQESAGKQQTQQLQTLQPQPPQPQPDPPPIPPGPIPVPMALLEPEPGRSEDCDVLEAAQPLEQGFLQREEGPSSSTGQHRQPQEEEEAKPEPERSGLSWSNREKAKQAFKELLRDKAVPSNASWEQAMKMVVTDPRYSALPKLSEKKQAFNAYKAQREKEEKEEARLRAKEAKQTLQHFLEQHERMTSTTRYRRAEQTFGDLEVWAVVPERERKEVYDDVLFFLAKKEKEQAKQLRRRNIQALKSILDGMSSVNFQTTWSQAQQYLMDNPSFAQDQQLQNMDKEDALICFEEHIRALEREEEEERERARLRERRQQRKNREAFQSFLDELHETGQLHSMSTWMELYPAVSTDVRFANMLGQPGSTPLDLFKFYVEELKARFHDEKKIIKDILKDRGFCVEVNTAFEDFAHVISFDKRAAALDAGNIKLTFNSLLEKAEARETEREKEEARRMRRREAAFRSMLRQAVPALELGTAWEEVRERFVCDSAFEQITLESERIRLFREFLQVLEQTECQHLHTKGRKHGRKGKKHHRKRSHSPSGSESDEEELPPPSLRPPKRRRRNPSESGSEPSSSLDSVESGGAALGGPGSPSSHLLLGSDHGLRKTKKPKKKTKKRRHKSTSPDSETDPEDKAGKESEDREQEQDREPRQAELPNRSPGFGIKKEKTGWDTSESELSEGELERRRRTLLQQLDDHQ.

WW domains are found at residues 92 to 125 and 133 to 166; these read GPPR…KPSV and LLSQ…RPKD. A disordered region spans residues 146 to 277; that stretch reads TGKPYYYNNQ…RSGLSWSNRE (132 aa). K148 bears the N6-acetyllysine mark. Residue K175 forms a Glycyl lysine isopeptide (Lys-Gly) (interchain with G-Cter in SUMO2) linkage. A compositionally biased stretch (low complexity) spans 182–191; sequence QQTQQLQTLQ. Residues 192-211 are compositionally biased toward pro residues; the sequence is PQPPQPQPDPPPIPPGPIPV. 6 consecutive FF domains span residues 276 to 330, 340 to 397, 410 to 470, 490 to 550, 554 to 610, and 625 to 682; these read REKA…YKAQ, RLRA…VLFF, RRRN…HIRA, QRKN…YVEE, RFHD…LLEK, and RMRR…FLQV. A coiled-coil region spans residues 604–640; sequence FNSLLEKAEARETEREKEEARRMRRREAAFRSMLRQA. The interval 690 to 870 is disordered; that stretch reads HLHTKGRKHG…TLLQQLDDHQ (181 aa). A compositionally biased stretch (basic residues) spans 691–711; sequence LHTKGRKHGRKGKKHHRKRSH. Composition is skewed to low complexity over residues 739-756 and 764-774; these read SESG…ESGG and SPSSHLLLGSD. S764 is modified (phosphoserine). Residues 778-794 show a composition bias toward basic residues; it reads RKTKKPKKKTKKRRHKS. Basic and acidic residues predominate over residues 804–824; sequence EDKAGKESEDREQEQDREPRQ. The residue at position 831 (S831) is a Phosphoserine. K837 participates in a covalent cross-link: Glycyl lysine isopeptide (Lys-Gly) (interchain with G-Cter in SUMO2). Residue S851 is modified to Phosphoserine.

Belongs to the PRPF40 family. In terms of assembly, interacts with the N-terminus of HD.

It is found in the nucleus speckle. In terms of biological role, may be involved in pre-mRNA splicing. This is Pre-mRNA-processing factor 40 homolog B (Prpf40b) from Mus musculus (Mouse).